Here is a 327-residue protein sequence, read N- to C-terminus: MEVGSVLFFVVIGLAIIALAVFFTFVPIMLWISALAAGVRISIFTLVGMRLRRVIPSRVVNPLIKASKAGLGITINQLESHYLAGGNVDRVVNALIAAHRANIELTFERGAAIDLAGRDVLEAVQMSVNPKVIETPFIAGVAMDGIEVKAKARITVRANIDRLVGGAGEETIIARVGEGIVSTIGSQTDHKKVLENPDMISQTVLGKGLDSGTAFEILSIDIADIDIGKNIGAVLQTDQAEADKNIAQAKAEERRAMAVAQEQEMRAKVEEMRAKVVEAEAEVPLAMAEALRSGNIGVMDYMNIQNLTADTDMRDSIGKMSKEDDEK.

2 helical membrane-spanning segments follow: residues 6–26 (VLFF…FTFV) and 28–48 (IMLW…TLVG).

It belongs to the flotillin-like FloA family. Homooligomerizes.

The protein localises to the cell membrane. The protein resides in the membrane raft. Found in functional membrane microdomains (FMM) that may be equivalent to eukaryotic membrane rafts. FMMs are highly dynamic and increase in number as cells age. Flotillins are thought to be important factors in membrane fluidity. In Priestia megaterium (strain DSM 319 / IMG 1521) (Bacillus megaterium), this protein is Flotillin-like protein FloA.